The primary structure comprises 340 residues: Heat-inducible transcription repressor HrcA (340 aa).

The protein belongs to the HrcA family.

Functionally, negative regulator of class I heat shock genes (grpE-dnaK-dnaJ and groELS operons). Prevents heat-shock induction of these operons. The protein is Heat-inducible transcription repressor HrcA of Clavibacter michiganensis subsp. michiganensis (strain NCPPB 382).